Consider the following 215-residue polypeptide: MSKVYDWFEERLEIQAIADDITSKYVPPHVNIFHCLGGITLTCFLVQVATGFAMTFYYRPTVTEAFASVQYIMTEVNFGWLIRSVHRWSASMMVLMMILHVFRVYLTGGFKKPRELTWVTGVVLAVLTASFGVTGYSLPRDQIGYWAVKIVTGVPEAIPIIGSPLVELLRGSASVGQSTLTRFYSLHTFVLPLLTAVFMLMHFPMIRKQGISGPL.

A helical membrane pass occupies residues 32–52; the sequence is IFHCLGGITLTCFLVQVATGF. Residue cysteine 35 participates in heme c binding. Heme b contacts are provided by histidine 86 and histidine 100. 3 helical membrane-spanning segments follow: residues 90-110, 116-136, and 186-206; these read ASMM…TGGF, LTWV…VTGY, and LHTF…FPMI. Positions 187 and 202 each coordinate heme b.

The protein belongs to the cytochrome b family. PetB subfamily. The 4 large subunits of the cytochrome b6-f complex are cytochrome b6, subunit IV (17 kDa polypeptide, PetD), cytochrome f and the Rieske protein, while the 4 small subunits are PetG, PetL, PetM and PetN. The complex functions as a dimer. The cofactor is heme b. It depends on heme c as a cofactor.

It is found in the plastid. The protein resides in the chloroplast thylakoid membrane. In terms of biological role, component of the cytochrome b6-f complex, which mediates electron transfer between photosystem II (PSII) and photosystem I (PSI), cyclic electron flow around PSI, and state transitions. In Amborella trichopoda, this protein is Cytochrome b6.